Here is a 219-residue protein sequence, read N- to C-terminus: Large ribosomal subunit protein uL1 (219 aa).

It belongs to the universal ribosomal protein uL1 family. As to quaternary structure, part of the 50S ribosomal subunit.

In terms of biological role, binds directly to 23S rRNA. Probably involved in E site tRNA release. Its function is as follows. Protein L1 is also a translational repressor protein, it controls the translation of its operon by binding to its mRNA. The polypeptide is Large ribosomal subunit protein uL1 (Pyrococcus abyssi (strain GE5 / Orsay)).